The chain runs to 423 residues: Galactosylceramide sulfotransferase (423 aa).

The Cytoplasmic segment spans residues 1–14 (MLPPQKKPWESMAK). Residues 15–35 (GLVLGALFTSFLLLVYSYAVP) traverse the membrane as a helical; Signal-anchor for type II membrane protein segment. At 36 to 423 (PLHAGLASTT…WKFIRDFLRW (388 aa)) the chain is on the lumenal side. Residues Asn66 and Asn312 are each glycosylated (N-linked (GlcNAc...) asparagine).

This sequence belongs to the galactose-3-O-sulfotransferase family. In terms of tissue distribution, expressed in kidney proximal tubule, gastric mucosa and adenocarcinoma. Highly expressed in renal cell carcinoma cell lines.

It localises to the golgi apparatus membrane. The enzyme catalyses a beta-D-galactosyl-(1&lt;-&gt;1')-N-acylsphing-4-enine + 3'-phosphoadenylyl sulfate = an N-acyl-1-beta-D-(3-O-sulfo)-galactosyl-sphing-4-enine + adenosine 3',5'-bisphosphate + H(+). It catalyses the reaction a 1-O-alkyl-2-acyl-3-O-(beta-D-galactosyl)-sn-glycerol + 3'-phosphoadenylyl sulfate = a 1-O-alkyl-2-acyl-3-(beta-D-3-sulfogalactosyl)-sn-glycerol + adenosine 3',5'-bisphosphate + H(+). The catalysed reaction is a beta-D-Gal-(1&lt;-&gt;1')-ceramide + 3'-phosphoadenylyl sulfate = 1-(3-O-sulfo-beta-D-galactosyl)-ceramide + adenosine 3',5'-bisphosphate + H(+). It carries out the reaction a 1,2-diacyl-3-O-(beta-D-galactosyl)-sn-glycerol + 3'-phosphoadenylyl sulfate = 1,2-diacyl-3-(3-O-sulfo-beta-D-galactosyl)-sn-glycerol + adenosine 3',5'-bisphosphate + H(+). The enzyme catalyses a beta-D-Gal-(1-&gt;4)-beta-D-Glc-(1&lt;-&gt;1)-Cer(d18:1(4E)) + 3'-phosphoadenylyl sulfate = beta-D-3-sulfogalactosyl-(1-&gt;4)-beta-D-glucosyl-(1&lt;-&gt;1')-N-acylsphing-4-enine + adenosine 3',5'-bisphosphate + H(+). The protein operates within lipid metabolism; sphingolipid metabolism. Its function is as follows. Catalyzes the transfer of a sulfate group to position 3 of non-reducing beta-galactosyl residues in glycerolipids and sphingolipids, therefore participates in the biosynthesis of sulfoglycolipids. Catalyzes the synthesis of galactosylceramide sulfate (sulfatide), a major lipid component of the myelin sheath and of monogalactosylalkylacylglycerol sulfate (seminolipid), present in spermatocytes. Seems to prefer beta-glycosides at the non-reducing termini of sugar chains attached to a lipid moiety. Also acts on lactosylceramide, galactosyl 1-alkyl-2-sn-glycerol and galactosyl diacylglycerol (in vitro). This Homo sapiens (Human) protein is Galactosylceramide sulfotransferase.